The primary structure comprises 258 residues: Imidazole glycerol phosphate synthase subunit HisF (258 aa).

Residues D11 and D130 contribute to the active site.

Belongs to the HisA/HisF family. In terms of assembly, heterodimer of HisH and HisF.

The protein localises to the cytoplasm. It catalyses the reaction 5-[(5-phospho-1-deoxy-D-ribulos-1-ylimino)methylamino]-1-(5-phospho-beta-D-ribosyl)imidazole-4-carboxamide + L-glutamine = D-erythro-1-(imidazol-4-yl)glycerol 3-phosphate + 5-amino-1-(5-phospho-beta-D-ribosyl)imidazole-4-carboxamide + L-glutamate + H(+). It participates in amino-acid biosynthesis; L-histidine biosynthesis; L-histidine from 5-phospho-alpha-D-ribose 1-diphosphate: step 5/9. Its function is as follows. IGPS catalyzes the conversion of PRFAR and glutamine to IGP, AICAR and glutamate. The HisF subunit catalyzes the cyclization activity that produces IGP and AICAR from PRFAR using the ammonia provided by the HisH subunit. This is Imidazole glycerol phosphate synthase subunit HisF from Shigella flexneri serotype 5b (strain 8401).